Here is a 253-residue protein sequence, read N- to C-terminus: Imidazole glycerol phosphate synthase subunit HisF (253 aa).

Active-site residues include aspartate 11 and aspartate 130.

It belongs to the HisA/HisF family. As to quaternary structure, heterodimer of HisH and HisF.

It is found in the cytoplasm. It catalyses the reaction 5-[(5-phospho-1-deoxy-D-ribulos-1-ylimino)methylamino]-1-(5-phospho-beta-D-ribosyl)imidazole-4-carboxamide + L-glutamine = D-erythro-1-(imidazol-4-yl)glycerol 3-phosphate + 5-amino-1-(5-phospho-beta-D-ribosyl)imidazole-4-carboxamide + L-glutamate + H(+). It functions in the pathway amino-acid biosynthesis; L-histidine biosynthesis; L-histidine from 5-phospho-alpha-D-ribose 1-diphosphate: step 5/9. Functionally, IGPS catalyzes the conversion of PRFAR and glutamine to IGP, AICAR and glutamate. The HisF subunit catalyzes the cyclization activity that produces IGP and AICAR from PRFAR using the ammonia provided by the HisH subunit. The protein is Imidazole glycerol phosphate synthase subunit HisF of Geotalea daltonii (strain DSM 22248 / JCM 15807 / FRC-32) (Geobacter daltonii).